Reading from the N-terminus, the 154-residue chain is Myoglobin (154 aa).

Residues 2–148 (GLSDGEWQLV…FRKDMASNYK (147 aa)) enclose the Globin domain. S4 carries the post-translational modification Phosphoserine. H65 serves as a coordination point for nitrite. Residue H65 coordinates O2. At T68 the chain carries Phosphothreonine. H94 contacts heme b.

Belongs to the globin family. In terms of assembly, monomeric.

The protein resides in the cytoplasm. The protein localises to the sarcoplasm. The catalysed reaction is Fe(III)-heme b-[protein] + nitric oxide + H2O = Fe(II)-heme b-[protein] + nitrite + 2 H(+). The enzyme catalyses H2O2 + AH2 = A + 2 H2O. Functionally, monomeric heme protein which primary function is to store oxygen and facilitate its diffusion within muscle tissues. Reversibly binds oxygen through a pentacoordinated heme iron and enables its timely and efficient release as needed during periods of heightened demand. Depending on the oxidative conditions of tissues and cells, and in addition to its ability to bind oxygen, it also has a nitrite reductase activity whereby it regulates the production of bioactive nitric oxide. Under stress conditions, like hypoxia and anoxia, it also protects cells against reactive oxygen species thanks to its pseudoperoxidase activity. This is Myoglobin (MB) from Hylobates agilis (Agile gibbon).